We begin with the raw amino-acid sequence, 45 residues long: Large ribosomal subunit protein bL34 (45 aa).

A disordered region spans residues 1 to 45 (MTKRTFGGTSRKRKRVSGFRVRMRSHTGRRVIRTRRKRGRSRLAA). Over residues 10–45 (SRKRKRVSGFRVRMRSHTGRRVIRTRRKRGRSRLAA) the composition is skewed to basic residues.

This sequence belongs to the bacterial ribosomal protein bL34 family.

The polypeptide is Large ribosomal subunit protein bL34 (Synechococcus sp. (strain CC9311)).